Reading from the N-terminus, the 89-residue chain is Small ribosomal subunit protein uS15 (89 aa).

The protein belongs to the universal ribosomal protein uS15 family. As to quaternary structure, part of the 30S ribosomal subunit. Forms a bridge to the 50S subunit in the 70S ribosome, contacting the 23S rRNA.

One of the primary rRNA binding proteins, it binds directly to 16S rRNA where it helps nucleate assembly of the platform of the 30S subunit by binding and bridging several RNA helices of the 16S rRNA. Functionally, forms an intersubunit bridge (bridge B4) with the 23S rRNA of the 50S subunit in the ribosome. The chain is Small ribosomal subunit protein uS15 from Trichodesmium erythraeum (strain IMS101).